A 285-amino-acid polypeptide reads, in one-letter code: GTP-binding protein 8 (285 aa).

Residues 110 to 283 (RQPEVCFIGR…KCFIADITGS (174 aa)) enclose the EngB-type G domain. Residues 118–125 (GRSNVGKS), 147–151 (GHTKK), 165–168 (DMPG), 227–230 (TKID), and 262–264 (ISA) contribute to the GTP site. Mg(2+)-binding residues include S125 and T149.

It belongs to the TRAFAC class TrmE-Era-EngA-EngB-Septin-like GTPase superfamily. EngB GTPase family. Mg(2+) is required as a cofactor.

This is GTP-binding protein 8 (Gtpbp8) from Rattus norvegicus (Rat).